Here is a 219-residue protein sequence, read N- to C-terminus: Elongation factor Ts (219 aa).

The interval 82 to 85 (TDFV) is involved in Mg(2+) ion dislocation from EF-Tu.

It belongs to the EF-Ts family.

The protein localises to the cytoplasm. Associates with the EF-Tu.GDP complex and induces the exchange of GDP to GTP. It remains bound to the aminoacyl-tRNA.EF-Tu.GTP complex up to the GTP hydrolysis stage on the ribosome. This is Elongation factor Ts from Anaeromyxobacter sp. (strain Fw109-5).